Consider the following 285-residue polypeptide: MKRIGIYAKCNHPDAVMVARDVVGWLRGRGLEVFLEKKLAQDVGDAEQSHDRGSIPGMVDLIIVLGGDGTLISVARQVCGRDVPILGVNLGSLGFLTEITRGELYLSLEKVLKGEFSLSDRMMLEAVVWRHGLEAGRFSVLNDVVINKGAIARIIDMEVSVDTAYLTTFKSDGLIIATPTGSTAYNLSAGGPIISPGLHCLVVTPICPHMLANRPLIVSDTACIRIEMKLRDQDVVLTADGQVGMALEAGDVVEIRKADRCTRLIKSPSKEYFEVLRTKLGWGER.

The active-site Proton acceptor is Asp-68. Residues 68-69, 142-143, Arg-153, Lys-170, Asp-172, 183-188, and Gln-242 contribute to the NAD(+) site; these read DG, ND, and TAYNLS.

The protein belongs to the NAD kinase family. Requires a divalent metal cation as cofactor.

It localises to the cytoplasm. It catalyses the reaction NAD(+) + ATP = ADP + NADP(+) + H(+). Functionally, involved in the regulation of the intracellular balance of NAD and NADP, and is a key enzyme in the biosynthesis of NADP. Catalyzes specifically the phosphorylation on 2'-hydroxyl of the adenosine moiety of NAD to yield NADP. The polypeptide is NAD kinase (Syntrophotalea carbinolica (strain DSM 2380 / NBRC 103641 / GraBd1) (Pelobacter carbinolicus)).